The primary structure comprises 502 residues: Neuronal acetylcholine receptor subunit alpha-7 (502 aa).

A signal peptide spans 1 to 22; sequence MCGRRGGIWLALAAALLHVSLQ. Residues 23–233 lie on the Extracellular side of the membrane; the sequence is GEFQRRLYKE…VTMRRRTLYY (211 aa). Residues R42 and V44 each coordinate Ca(2+). N-linked (GlcNAc...) asparagine glycans are attached at residues N46, N90, and N133. A disulfide bridge connects residues C150 and C164. Residues S172 and Y210 each coordinate Ca(2+). A disulfide bridge links C212 with C213. 3 helical membrane-spanning segments follow: residues 234-254, 262-282, and 295-315; these read GLNL…VFLL, ISLG…VAEI, and QYFA…VIVL. The interval 260–267 is essential for TMEM35A/NACHO-mediated proper subunit assembly and trafficking to cell membrane; sequence EKISLGIT. The Cytoplasmic portion of the chain corresponds to 316-469; it reads RYHHHDPDGG…WKFAACVVDR (154 aa). The chain crosses the membrane as a helical span at residues 470–490; it reads LCLMAFSVFTIICTIGILMSA.

It belongs to the ligand-gated ion channel (TC 1.A.9) family. Acetylcholine receptor (TC 1.A.9.1) subfamily. Alpha-7/CHRNA7 sub-subfamily. Homopentamer. Can also form heteropentamers with CHRNB2, mainly found in basal forebrain cholinergic neurons. Interacts with RIC3; which is required for proper folding and assembly. Interacts with LYPD6. Interacts with CANX. Glycosylations at Asn-46, Asn-90 and Asn-133 are essential for TMEM35A/NACHO-mediated proper subunit assembly and trafficking to the cell membrane. Higly expressed in brain. ALso expressed in immune cells sucha as macrophages.

Its subcellular location is the postsynaptic cell membrane. The protein resides in the cell membrane. The enzyme catalyses K(+)(in) = K(+)(out). It catalyses the reaction Na(+)(in) = Na(+)(out). It carries out the reaction Ca(2+)(in) = Ca(2+)(out). The catalysed reaction is choline(out) = choline(in). The enzyme catalyses NH4(+)(in) = NH4(+)(out). It catalyses the reaction L-arginine(in) = L-arginine(out). It carries out the reaction guanidine(out) = guanidine(in). Activated by a myriad of ligands such as acetylcholine, cytisine, nicotine, choline and epibatidine. Oligomeric amyloid-beta protein 42 activates specifially CHRNA7:CHRNB2 nAchRs. Activity is modulated by positive allosteric modulators (PAMs), such as flavonoids, with a wide range of chemical diversity, pharmacological sensitivity and efficacy. AChR activity is inhibited by the antagonists alpha-conotoxons RgIA, ImI and ImII, small disulfide-constrained peptides from cone snails. Component of neuronal acetylcholine receptors (nAChRs) that function as pentameric, ligand-gated cation channels with high calcium permeability among other activities. nAChRs are excitatory neurotrasnmitter receptors formed by a collection of nAChR subunits known to mediate synaptic transmission in the nervous system and the neuromuscular junction. Each nAchR subunit confers differential attributes to channel properties, including activation, deactivation and desensitization kinetics, pH sensitivity, cation permeability, and binding to allosteric modulators. CHRNA7 forms homopentameric neuronal acetylcholine receptors abundantly expressed in the central nervous system, characterized by fast desensitization and high calcium permeability. Also forms heteropentamers with CHRNB2, mainly expressed in basal forebrain cholinergic neurons. Involved in the modulation of calcium-dependent signaling pathways and influences the release of neurotransmitters, including dopamine, glutamate and GABA. Involved in the modulation of calcium-dependent signaling pathways and influences the release of neurotransmitters, including dopamine, glutamate and GABA. Also expressed in non-neuronal cells such as immune cells like lymphocytes, monocytes and macrophages. In T cells, activation induces metabotropic signaling that results in an increase of intracellular Ca2+ concentrations, independent of ionotropic receptor functions. In macrophages, required for acetylcholine-mediated inhibition of TNF and other inflammatory cytokine release. Once activated by acetylcholine, nicotine or other agonists, selectively inhibits production of pro-inflammatory cytokines while leaving anti-inflammatory cytokines undisturbed. Stimulates the cholinergic anti-inflammatory pathway, controlling inflammation by inhibiting NFKB nuclear translocation and activating the JAK2-STAT3 pathway, independently of ion channel activity. Also expressed in the urothelium where it modulates reflex bladder activity by increasing intracellular calcium through internal stores and decreasing basal ATP release. In Mus musculus (Mouse), this protein is Neuronal acetylcholine receptor subunit alpha-7 (Chrna7).